A 281-amino-acid polypeptide reads, in one-letter code: Phosphatidylglycerol--prolipoprotein diacylglyceryl transferase (281 aa).

Transmembrane regions (helical) follow at residues 29–49 (FYSLAYIVGIVLAYWHLGKMI), 64–84 (LFFYCTLGVIFGGRIGYVLFY), 100–120 (GGMSFHGGVIGVVLAILFVSW), and 124–144 (LNWLRVCDYIAVNVPFGMFLG). Arginine 145 contacts a 1,2-diacyl-sn-glycero-3-phospho-(1'-sn-glycerol). A run of 3 helical transmembrane segments spans residues 180–200 (QLYQAGLEGLLMMAVMLLLFW), 209–229 (GVLVGVFTIGIAGARFVNEFF), and 248–268 (GQWLSIPMILVGLAVVVYALT).

It belongs to the Lgt family.

It localises to the cell inner membrane. It carries out the reaction L-cysteinyl-[prolipoprotein] + a 1,2-diacyl-sn-glycero-3-phospho-(1'-sn-glycerol) = an S-1,2-diacyl-sn-glyceryl-L-cysteinyl-[prolipoprotein] + sn-glycerol 1-phosphate + H(+). Its pathway is protein modification; lipoprotein biosynthesis (diacylglyceryl transfer). Catalyzes the transfer of the diacylglyceryl group from phosphatidylglycerol to the sulfhydryl group of the N-terminal cysteine of a prolipoprotein, the first step in the formation of mature lipoproteins. This Erythrobacter litoralis (strain HTCC2594) protein is Phosphatidylglycerol--prolipoprotein diacylglyceryl transferase.